The chain runs to 92 residues: UPF0223 protein EF_2462 (92 aa).

This sequence belongs to the UPF0223 family.

This is UPF0223 protein EF_2462 from Enterococcus faecalis (strain ATCC 700802 / V583).